A 559-amino-acid polypeptide reads, in one-letter code: Nucleolar protein 12 (559 aa).

Residues 24–194 are disordered; sequence ASSAGPVQAP…AGNESDIPVH (171 aa). Residues 44 to 56 show a composition bias toward basic and acidic residues; that stretch reads QKVREPAKPKVHL. Residues 57–110 are compositionally biased toward acidic residues; it reads EEDDEVLSEISEELSFEEDGPSDEDEDEDEDEENSEQEDGSGDEQEEEESEDVD. The segment covering 141-180 has biased composition (basic and acidic residues); that stretch reads NDNDDLEGKYLDKVAAEEEADRAGKRQKNDALTKTEKPAV. RRM domains are found at residues 211-320 and 328-432; these read RTVF…SVAH and RCVF…RAKD. Residues 429 to 559 form a disordered region; that stretch reads RAKDPRKTAL…RASEWKKKKN (131 aa). Basic and acidic residues-rich tracts occupy residues 516 to 532 and 550 to 559; these read EGRRASARDGLPKDLKQ and RASEWKKKKN.

It belongs to the RRM RBM34 family.

It is found in the nucleus. The protein localises to the nucleolus. Functionally, involved in pre-25S rRNA processing. This is Nucleolar protein 12 (NOP12) from Gibberella zeae (strain ATCC MYA-4620 / CBS 123657 / FGSC 9075 / NRRL 31084 / PH-1) (Wheat head blight fungus).